A 145-amino-acid chain; its full sequence is Basic phospholipase A2 cL038 (145 aa).

The signal sequence occupies residues 1-21 (MYPAHLLVLLAVCVSLLGASA). The propeptide occupies 22-27 (IPPLPL). 7 cysteine pairs are disulfide-bonded: Cys38–Cys98, Cys54–Cys144, Cys56–Cys72, Cys71–Cys125, Cys78–Cys118, Cys87–Cys111, and Cys105–Cys116. Tyr55, Gly57, and Gly59 together coordinate Ca(2+). His75 is a catalytic residue. Asp76 lines the Ca(2+) pocket. The active site involves Asp119.

It belongs to the phospholipase A2 family. Group I subfamily. D49 sub-subfamily. Requires Ca(2+) as cofactor. In terms of tissue distribution, expressed by the venom gland.

The protein localises to the secreted. The catalysed reaction is a 1,2-diacyl-sn-glycero-3-phosphocholine + H2O = a 1-acyl-sn-glycero-3-phosphocholine + a fatty acid + H(+). Functionally, PLA2 catalyzes the calcium-dependent hydrolysis of the 2-acyl groups in 3-sn-phosphoglycerides. The chain is Basic phospholipase A2 cL038 from Laticauda semifasciata (Black-banded sea krait).